Reading from the N-terminus, the 181-residue chain is Oligoribonuclease (181 aa).

Residues Leu8 to Leu171 form the Exonuclease domain. Tyr129 is a catalytic residue.

This sequence belongs to the oligoribonuclease family.

The protein resides in the cytoplasm. Functionally, 3'-to-5' exoribonuclease specific for small oligoribonucleotides. This Yersinia enterocolitica serotype O:8 / biotype 1B (strain NCTC 13174 / 8081) protein is Oligoribonuclease.